We begin with the raw amino-acid sequence, 339 residues long: MCSLRLLLSDSYDPWFNLSLEEYIYKNIPKKQSILFLWRNQNTVVIGRAQNAWKECNTRRMERDGIKLARRNSGGGAVFHDLGNTCFTFISTQEHYDKSISSNIVLNGLSYIGIKAIISGRNDIVIRTENGEHRKISGSAYRETSGRKFHHGTLLLHVDIDKLDYYLNPDFKKLETKGITSIRSRVANLNELKPGINHQEVCLGLTEAFFQHYGMKVKPEILSTDNFCKIPEFFKQFNKQSDWNWNFGSAPAFTHQLDTRFDWGSVTLHCDIERGIIHRSHIFTDSLDPSPLEILAKKLVGIPYNNKSILCCCKEWMQSWPQYKKELSEVSHWLIKTIS.

Residues 29-217 form the BPL/LPL catalytic domain; that stretch reads PKKQSILFLW…AFFQHYGMKV (189 aa). ATP-binding positions include Arg71, 76–79, and Lys135; that span reads GAVF. Lys135 lines the (R)-lipoate pocket.

The protein belongs to the LplA family. In terms of assembly, monomer.

The protein localises to the cytoplasm. The catalysed reaction is L-lysyl-[lipoyl-carrier protein] + (R)-lipoate + ATP = N(6)-[(R)-lipoyl]-L-lysyl-[lipoyl-carrier protein] + AMP + diphosphate + H(+). It functions in the pathway protein modification; protein lipoylation via exogenous pathway; protein N(6)-(lipoyl)lysine from lipoate: step 1/2. The protein operates within protein modification; protein lipoylation via exogenous pathway; protein N(6)-(lipoyl)lysine from lipoate: step 2/2. Its function is as follows. Catalyzes both the ATP-dependent activation of exogenously supplied lipoate to lipoyl-AMP and the transfer of the activated lipoyl onto the lipoyl domains of lipoate-dependent enzymes. The chain is Lipoate-protein ligase A from Blochmanniella pennsylvanica (strain BPEN).